We begin with the raw amino-acid sequence, 107 residues long: Nucleoid-associated protein A1I_00660 (107 aa).

The tract at residues 81 to 107 (KCDSDSQNSMSGALSGMSLPPGFKMPF) is disordered.

Belongs to the YbaB/EbfC family. Homodimer.

The protein localises to the cytoplasm. Its subcellular location is the nucleoid. Functionally, binds to DNA and alters its conformation. May be involved in regulation of gene expression, nucleoid organization and DNA protection. This Rickettsia bellii (strain OSU 85-389) protein is Nucleoid-associated protein A1I_00660.